The chain runs to 796 residues: Exocyst complex component 3 (796 aa).

Residues Pro87–Leu174 adopt a coiled-coil conformation.

It belongs to the SEC6 family. In terms of assembly, the exocyst complex is composed of sec-3/exoc1, sec-5/exoc2, sec-6/exoc3, sec-8/exoc4, sec-10/exoc5, sec-15/exoc6, exo-70/exoc7 and exo-84/exoc8.

In terms of biological role, component of the exocyst complex involved in the docking of exocytic vesicles with fusion sites on the plasma membrane. The protein is Exocyst complex component 3 (sec-6) of Caenorhabditis elegans.